Consider the following 653-residue polypeptide: Forkhead box protein O1 (653 aa).

Disordered stretches follow at residues 1–64 (MAEA…ASAA) and 117–156 (LHPAPPQPPPPGPLSQHPPVPPAAGPLAGQPRKSSSSRRN). Threonine 24 is modified (phosphothreonine; by PKB/AKT1 or PKB/AKT2 and SGK1). Residues 35–64 (SNSATSSPAPSGGATANPDASAGLPPASAA) are compositionally biased toward low complexity. The segment covering 119–140 (PAPPQPPPPGPLSQHPPVPPAA) has biased composition (pro residues). Residues 157 to 233 (AWGNLSYADL…VQNEGTGKSS (77 aa)) constitute a DNA-binding region (fork-head). 2 DNA-binding regions span residues 209–216 (NSIRHNLS) and 232–235 (SSWW). Serine 210 is modified (phosphoserine; by STK4/MST1). A phosphoserine mark is found at serine 216, serine 232, and serine 233. The segment at 232–335 (SSWWMLNPEG…FSPIMTEQDD (104 aa)) is disordered. 2 positions are modified to N6-acetyllysine: lysine 243 and lysine 246. Serine 247 bears the Phosphoserine; by CDK1 mark. 2 positions are modified to omega-N-methylarginine; by PRMT1: arginine 249 and arginine 251. The Nuclear localization signal signature appears at 249–251 (RRR). Serine 254 carries the post-translational modification Phosphoserine; by PKB/AKT1 and SGK1. Lysine 260, lysine 263, and lysine 272 each carry N6-acetyllysine. The tract at residues 281 to 561 (GAGDSPGSQF…RLTPVKTPLQ (281 aa)) is sufficient for interaction with NLK. Serine 285 and serine 296 each carry phosphoserine. The segment covering 307 to 324 (NWSTFRPRTSSNASTISG) has biased composition (polar residues). The residue at position 317 (serine 317) is a Phosphoserine; by PKB/AKT1 or PKB/AKT2. Residue serine 320 is modified to Phosphoserine; by CK1 and SGK1. Serine 323 bears the Phosphoserine mark. Phosphoserine; by DYRK1A is present on serine 327. Threonine 331 carries the phosphothreonine modification. The interval 361–457 (SEISNPENME…GGLNQFNCAQ (97 aa)) is required for interaction with RUNX2. Lysine 421 bears the N6-acetyllysine mark. The Required for interaction with SIRT1 signature appears at 460–464 (LKELL).

In terms of assembly, interacts with LRPPRC. Interacts with RUNX2; the interaction inhibits RUNX2 transcriptional activity and mediates the IGF1/insulin-dependent BGLAP expression in osteoblasts Interacts with PPP2R1A; the interaction regulates the dephosphorylation of FOXO1 at Thr-24 and Ser-254 leading to its nuclear import. Interacts with NLK. Interacts with SIRT1; the interaction results in the deacetylation of FOXO1 leading to activation of FOXO1-mediated transcription of genes involved in DNA repair and stress resistance. Binds to CDK1. Interacts with the 14-3-3 proteins, YWHAG and YWHAZ; the interactions require insulin-stimulated phosphorylation on Thr-24, promote nuclear exit and loss of transcriptional activity. Interacts with SKP2; the interaction ubiquitinates FOXO1 leading to its proteasomal degradation. The interaction requires the presence of KRIT1. Interacts (via the C-terminal half) with ATF4 (via its DNA-binding domain); the interaction occurs in osteoblasts, regulates glucose homeostasis via suppression of beta-cell proliferation and subsequent decrease in insulin production. Interacts with PRMT1; the interaction methylates FOXO1, prevents PKB/AKT1 phosphorylation and retains FOXO1 in the nucleus. Interacts with EP300 and CREBBP; the interactions acetylate FOXO1. Interacts with SIRT2; the interaction is disrupted in response to oxidative stress or serum deprivation, leading to increased level of acetylated FOXO1, which promotes stress-induced autophagy by stimulating E1-like activating enzyme ATG7. Interacts (acetylated form) with ATG7; the interaction is increased in response to oxidative stress or serum deprivation and promotes the autophagic process leading to cell death. Interacts (acetylated form) with PPARG. Interacts with XBP1; this interaction is direct and leads to FOXO1 ubiquitination and degradation via the proteasome pathway. Interacts with WDFY2. Forms a complex with WDFY2 and AKT1. Interacts with CRY1. Interacts with PPIA/CYPA; the interaction promotes FOXO1 dephosphorylation, nuclear accumulation and transcriptional activity. Interacts with TOX4; FOXO1 is required for full induction of TOX4-dependent activity and the interaction is inhibited by insulin. Interacts (when phosphorylated on Ser-254) with STUB1/CHIP. Post-translationally, phosphorylation by NLK promotes nuclear export and inhibits the transcriptional activity. In response to growth factors, phosphorylation on Thr-24, Ser-254 and Ser-320 by PKB/AKT1 promotes nuclear export and inactivation of transactivational activity. Phosphorylation on Thr-24 is required for binding 14-3-3 proteins. Phosphorylation of Ser-254 decreases DNA-binding activity and promotes the phosphorylation of Thr-24 and Ser-317, permitting phosphorylation of Ser-320 and Ser-323, probably by CDK1, leading to nuclear exclusion and loss of function. Stress signals, such as response to oxygen or nitric oxide, attenuate the PKB/AKT1-mediated phosphorylation leading to nuclear retention. Phosphorylation of Ser-327 is independent of IGF1 and leads to reduced function. Dephosphorylated on Thr-24 and Ser-254 by PP2A in beta-cells under oxidative stress leading to nuclear retention. Phosphorylation of Ser-247 by CDK1 disrupts binding of 14-3-3 proteins leading to nuclear accumulation and has no effect on DNA binding nor transcriptional activity. Phosphorylation by STK4/MST1 on Ser-210, upon oxidative stress, inhibits binding to 14-3-3 proteins and nuclear export. PPIA/CYPA promotes its dephosphorylation on Ser-254. In terms of processing, ubiquitinated by SKP2. Ubiquitination leads to proteasomal degradation. Ubiquitinated by STUB1/CHIP; when Ser-254 is phosphorylated. Methylation inhibits AKT1-mediated phosphorylation at Ser-254 and is increased by oxidative stress. Post-translationally, acetylated. Acetylation at Lys-260 and Lys-272 are necessary for autophagic cell death induction. Deacetylated by SIRT2 in response to oxidative stress or serum deprivation, thereby negatively regulating FOXO1-mediated autophagic cell death. Once in the nucleus, acetylated by CREBBP/EP300. Acetylation diminishes the interaction with target DNA and attenuates the transcriptional activity. It increases the phosphorylation at Ser-254. Deacetylation by SIRT1 results in reactivation of the transcriptional activity. Oxidative stress by hydrogen peroxide treatment appears to promote deacetylation and uncoupling of insulin-induced phosphorylation. By contrast, resveratrol acts independently of acetylation. Acetylated at Lys-421, promoting its localization to the nucleus and transcription factor activity. Deacetylation at Lys-421 by SIRT6, promotes its translocation into the cytoplasm, preventing its transcription factor activity. Deacetylation and subsequent inhibition by SIRT6 has different effects depending on cell types: it inhibits gluconeogenesis in hepatocytes, promotes glucose sensing in pancreatic beta-cells and regulates lipid catabolism in brown adipocytes.

The protein localises to the cytoplasm. It is found in the nucleus. Functionally, transcription factor that is the main target of insulin signaling and regulates metabolic homeostasis in response to oxidative stress. Binds to the insulin response element (IRE) with consensus sequence 5'-TT[G/A]TTTTG-3' and the related Daf-16 family binding element (DBE) with consensus sequence 5'-TT[G/A]TTTAC-3'. Activity suppressed by insulin. Main regulator of redox balance and osteoblast numbers and controls bone mass. Orchestrates the endocrine function of the skeleton in regulating glucose metabolism. Also acts as a key regulator of chondrogenic commitment of skeletal progenitor cells in response to lipid availability: when lipids levels are low, translocates to the nucleus and promotes expression of SOX9, which induces chondrogenic commitment and suppresses fatty acid oxidation. Acts synergistically with ATF4 to suppress osteocalcin/BGLAP activity, increasing glucose levels and triggering glucose intolerance and insulin insensitivity. Also suppresses the transcriptional activity of RUNX2, an upstream activator of osteocalcin/BGLAP. Acts as an inhibitor of glucose sensing in pancreatic beta cells by acting as a transcription repressor and suppressing expression of PDX1. In hepatocytes, promotes gluconeogenesis by acting together with PPARGC1A and CEBPA to activate the expression of genes such as IGFBP1, G6PC1 and PCK1. Also promotes gluconeogenesis by directly promoting expression of PPARGC1A and G6PC1. Important regulator of cell death acting downstream of CDK1, PKB/AKT1 and STK4/MST1. Promotes neural cell death. Mediates insulin action on adipose tissue. Regulates the expression of adipogenic genes such as PPARG during preadipocyte differentiation and, adipocyte size and adipose tissue-specific gene expression in response to excessive calorie intake. Regulates the transcriptional activity of GADD45A and repair of nitric oxide-damaged DNA in beta-cells. Required for the autophagic cell death induction in response to starvation or oxidative stress in a transcription-independent manner. Mediates the function of MLIP in cardiomyocytes hypertrophy and cardiac remodeling. Positive regulator of apoptosis in cardiac smooth muscle cells as a result of its transcriptional activation of pro-apoptotic genes. Regulates endothelial cell (EC) viability and apoptosis in a PPIA/CYPA-dependent manner via transcription of CCL2 and BCL2L11 which are involved in EC chemotaxis and apoptosis. This chain is Forkhead box protein O1 (FOXO1), found in Ictidomys tridecemlineatus (Thirteen-lined ground squirrel).